The following is an 84-amino-acid chain: Small ribosomal subunit protein eS27w (84 aa).

A C4-type zinc finger spans residues 39–61; that stretch reads CQGCFNITTVFSHSQTVVVCGNC.

The protein belongs to the eukaryotic ribosomal protein eS27 family. Requires Zn(2+) as cofactor.

The chain is Small ribosomal subunit protein eS27w (RPS27D) from Arabidopsis thaliana (Mouse-ear cress).